We begin with the raw amino-acid sequence, 330 residues long: uncharacterized protein (330 aa).

Disordered regions lie at residues Val136–Ser160 and Asp172–Asn314. The span at Pro223–Pro235 shows a compositional bias: pro residues. A compositionally biased stretch (low complexity) spans Ile236–Thr246. Polar residues-rich tracts occupy residues Ala263–Glu276, Thr284–Val294, and Pro304–Asn314.

This is an uncharacterized protein from Danio rerio (Zebrafish).